The primary structure comprises 102 residues: MTKQKIRIKLKGFDHKILDQSALQIVEALERTGATISGPVPLPTRIQRYSVIRSSFIDKDSQEQFEIRTHKRLIDIVETTSKTIDALTNLNLPAGVSIDIKL.

This sequence belongs to the universal ribosomal protein uS10 family. In terms of assembly, part of the 30S ribosomal subunit.

Involved in the binding of tRNA to the ribosomes. This is Small ribosomal subunit protein uS10 from Dehalococcoides mccartyi (strain ATCC BAA-2266 / KCTC 15142 / 195) (Dehalococcoides ethenogenes (strain 195)).